Reading from the N-terminus, the 400-residue chain is Enoyl-[acyl-carrier-protein] reductase [NADH] (400 aa).

NAD(+) is bound by residues glycine 48–tyrosine 53, phenylalanine 74–glutamate 75, aspartate 111–alanine 112, and leucine 139–alanine 140. Residue tyrosine 225 coordinates substrate. Tyrosine 235 functions as the Proton donor in the catalytic mechanism. Residues lysine 244 and valine 273 to threonine 275 contribute to the NAD(+) site.

This sequence belongs to the TER reductase family. As to quaternary structure, monomer.

The catalysed reaction is a 2,3-saturated acyl-[ACP] + NAD(+) = a (2E)-enoyl-[ACP] + NADH + H(+). Its pathway is lipid metabolism; fatty acid biosynthesis. Involved in the final reduction of the elongation cycle of fatty acid synthesis (FAS II). Catalyzes the reduction of a carbon-carbon double bond in an enoyl moiety that is covalently linked to an acyl carrier protein (ACP). The polypeptide is Enoyl-[acyl-carrier-protein] reductase [NADH] (Burkholderia multivorans (strain ATCC 17616 / 249)).